The following is a 290-amino-acid chain: Flap endonuclease Xni (290 aa).

Asp-125 lines the Mg(2+) pocket. In terms of domain architecture, 5'-3' exonuclease spans 181-275; it reads VKTSQLIDFW…DIRLTTSSSA (95 aa). Residues Leu-192, Val-203, and Ile-206 each coordinate K(+). Residues 205-210 are interaction with DNA; that stretch reads GIGQVT.

This sequence belongs to the Xni family. Requires Mg(2+) as cofactor. The cofactor is K(+).

Functionally, has flap endonuclease activity. During DNA replication, flap endonucleases cleave the 5'-overhanging flap structure that is generated by displacement synthesis when DNA polymerase encounters the 5'-end of a downstream Okazaki fragment. This Colwellia psychrerythraea (strain 34H / ATCC BAA-681) (Vibrio psychroerythus) protein is Flap endonuclease Xni.